Reading from the N-terminus, the 262-residue chain is (5R,7aS)-5-hydroxy-7a-methyl-1-oxo-2,3,5,6,7,7a-hexahydro-1H-indene-carboxyl-CoA reductase (262 aa).

Residues aspartate 50, aspartate 77, valine 78, asparagine 104, tyrosine 170, lysine 174, and alanine 203 each coordinate NAD(+). The active-site Proton acceptor is the tyrosine 170.

This sequence belongs to the short-chain dehydrogenases/reductases (SDR) family.

It carries out the reaction (5R,7aS)-5-hydroxy-7a-methyl-1-oxo-2,3,5,6,7,7a-hexahydro-1H-indene-carboxyl-CoA + NAD(+) = (7aS)-7a-methyl-1,5-dioxo-2,3,5,6,7,7a-hexahydro-1H-indene-carboxyl-CoA + NADH + H(+). It participates in steroid metabolism; cholesterol degradation. Requires the presence of IpdC. Functionally, involved in the final steps of cholesterol and steroid degradation. Probably catalyzes the oxidation of the 5-OH group of (5R,7aS)-5-hydroxy-7a-methyl-1-oxo-2,3,5,6,7,7a-hexahydro-1H-indene-carboxyl-CoA, leading to the formation of HIEC-CoA. The sequence is that of (5R,7aS)-5-hydroxy-7a-methyl-1-oxo-2,3,5,6,7,7a-hexahydro-1H-indene-carboxyl-CoA reductase from Mycobacterium tuberculosis (strain ATCC 25618 / H37Rv).